Reading from the N-terminus, the 133-residue chain is Nodulation protein K (133 aa).

The protein is Nodulation protein K (nodK) of Bradyrhizobium elkanii.